Consider the following 324-residue polypeptide: MVRVSVPATSANLGPGFDTLGVALELRNVIEMDETGIDDVVIEVEGAGAGALEDPGRNMVYQAARLVFQRLGYEPNGLLIREKVAIPVARGMGSSAAAIVGGLVAANALVQKRTGGPGLDREELLRMAVAIEGHPDNVTPALLGGFTVSCMDPDRGPLYLCFPPPRGLRAVVVMPEVQIKGRKTEQSRGVLPAQVSLRDAVYNLNRTALLVAAVAQGRTDLLRVAMQDRLHQPYRAALVPGMRSVFEAALSAGALGVALSGAGPSVIALVAESAEPVALAMEAAFQWAGSNARSLTMDLAREGARVLSGPGREQDMLDRPPHWG.

Position 87–97 (87–97 (PVARGMGSSAA)) interacts with ATP.

This sequence belongs to the GHMP kinase family. Homoserine kinase subfamily.

Its subcellular location is the cytoplasm. The catalysed reaction is L-homoserine + ATP = O-phospho-L-homoserine + ADP + H(+). The protein operates within amino-acid biosynthesis; L-threonine biosynthesis; L-threonine from L-aspartate: step 4/5. Its function is as follows. Catalyzes the ATP-dependent phosphorylation of L-homoserine to L-homoserine phosphate. The chain is Homoserine kinase from Symbiobacterium thermophilum (strain DSM 24528 / JCM 14929 / IAM 14863 / T).